A 384-amino-acid chain; its full sequence is Methylthioribose-1-phosphate isomerase (384 aa).

The active-site Proton donor is the Asp255.

It belongs to the eIF-2B alpha/beta/delta subunits family. MtnA subfamily.

It is found in the cytoplasm. The protein resides in the nucleus. The enzyme catalyses 5-(methylsulfanyl)-alpha-D-ribose 1-phosphate = 5-(methylsulfanyl)-D-ribulose 1-phosphate. Its pathway is amino-acid biosynthesis; L-methionine biosynthesis via salvage pathway; L-methionine from S-methyl-5-thio-alpha-D-ribose 1-phosphate: step 1/6. Its function is as follows. Catalyzes the interconversion of methylthioribose-1-phosphate (MTR-1-P) into methylthioribulose-1-phosphate (MTRu-1-P). In Talaromyces stipitatus (strain ATCC 10500 / CBS 375.48 / QM 6759 / NRRL 1006) (Penicillium stipitatum), this protein is Methylthioribose-1-phosphate isomerase (mri1).